Here is a 462-residue protein sequence, read N- to C-terminus: tRNA modification GTPase MnmE (462 aa).

Arg22, Glu87, and Arg126 together coordinate (6S)-5-formyl-5,6,7,8-tetrahydrofolate. The TrmE-type G domain maps to 220-382; it reads GLKVAIVGRP…LARKVQEIVL (163 aa). Residue Asn230 coordinates K(+). GTP-binding positions include 230–235, 249–255, and 274–277; these read NVGKSS, SNIPGTT, and DTAG. Ser234 lines the Mg(2+) pocket. Ser249, Ile251, and Thr254 together coordinate K(+). Thr255 contributes to the Mg(2+) binding site. Lys462 serves as a coordination point for (6S)-5-formyl-5,6,7,8-tetrahydrofolate.

It belongs to the TRAFAC class TrmE-Era-EngA-EngB-Septin-like GTPase superfamily. TrmE GTPase family. In terms of assembly, homodimer. Heterotetramer of two MnmE and two MnmG subunits. The cofactor is K(+).

The protein resides in the cytoplasm. In terms of biological role, exhibits a very high intrinsic GTPase hydrolysis rate. Involved in the addition of a carboxymethylaminomethyl (cmnm) group at the wobble position (U34) of certain tRNAs, forming tRNA-cmnm(5)s(2)U34. This Moorella thermoacetica (strain ATCC 39073 / JCM 9320) protein is tRNA modification GTPase MnmE.